A 204-amino-acid chain; its full sequence is MAAASPSVFLLMITGQVESAQFPEYDDLYCKYCFVYGQDWAPTAGLEEGISQIASKSQDVRQALVWNFPIDVTFKSTNPYGWPQIVLSVYGPDVFGNDVVRGYGAVHVPLSPGRHKRTIPMFVPESTSTLQKFTSWFMGRRPEYTDPKVVAQGEGREVTRVRSQGFVTLLFNVVTKDMKKLGYDTGPVDTQGVLGPSLPQGNPQ.

A C2 B9-type domain is found at 9–127 (FLLMITGQVE…TIPMFVPEST (119 aa)).

The protein belongs to the B9D family. As to quaternary structure, part of the tectonic-like complex (also named B9 complex).

It is found in the cytoplasm. The protein localises to the cytoskeleton. It localises to the cilium basal body. Functionally, component of the tectonic-like complex, a complex localized at the transition zone of primary cilia and acting as a barrier that prevents diffusion of transmembrane proteins between the cilia and plasma membranes. Required for ciliogenesis and sonic hedgehog/SHH signaling. In Mus musculus (Mouse), this protein is B9 domain-containing protein 1 (B9d1).